The chain runs to 606 residues: DNA ligase (606 aa).

Glu263 lines the ATP pocket. The active-site N6-AMP-lysine intermediate is Lys265. Positions 270, 285, 315, 355, 432, and 438 each coordinate ATP.

The protein belongs to the ATP-dependent DNA ligase family. It depends on Mg(2+) as a cofactor. Requires Mn(2+) as cofactor.

The enzyme catalyses ATP + (deoxyribonucleotide)n-3'-hydroxyl + 5'-phospho-(deoxyribonucleotide)m = (deoxyribonucleotide)n+m + AMP + diphosphate.. The catalysed reaction is ADP + (deoxyribonucleotide)n-3'-hydroxyl + 5'-phospho-(deoxyribonucleotide)m = (deoxyribonucleotide)n+m + AMP + phosphate.. It catalyses the reaction GTP + (deoxyribonucleotide)n-3'-hydroxyl + 5'-phospho-(deoxyribonucleotide)m = (deoxyribonucleotide)n+m + GMP + diphosphate.. Functionally, DNA ligase that seals nicks in double-stranded DNA during DNA replication, DNA recombination and DNA repair. Can use ATP, ADP and GTP, but not CTP, TTP or NAD(+). The polypeptide is DNA ligase (Sulfophobococcus zilligii).